Reading from the N-terminus, the 400-residue chain is uncharacterized protein (400 aa).

This is an uncharacterized protein from Saccharomyces cerevisiae (strain ATCC 204508 / S288c) (Baker's yeast).